The primary structure comprises 545 residues: Eukaryotic translation initiation factor 3 subunit D-2 (545 aa).

Positions 94–148 (FQRGRFRGNTRNNPRTRGRTGRGGAVTGTGGNQPGVGVNERTKYGKGRDNRRQMG) are disordered. Over residues 95 to 113 (QRGRFRGNTRNNPRTRGRT) the composition is skewed to basic residues. The span at 114 to 127 (GRGGAVTGTGGNQP) shows a compositional bias: gly residues. The span at 133–145 (ERTKYGKGRDNRR) shows a compositional bias: basic and acidic residues. The tract at residues 287–301 (QFDLLTVNETALEPP) is RNA gate.

This sequence belongs to the eIF-3 subunit D family. In terms of assembly, component of the eukaryotic translation initiation factor 3 (eIF-3) complex. The eIF-3 complex interacts with pix.

The protein resides in the cytoplasm. MRNA cap-binding component of the eukaryotic translation initiation factor 3 (eIF-3) complex, which is involved in protein synthesis of a specialized repertoire of mRNAs and, together with other initiation factors, stimulates binding of mRNA and methionyl-tRNAi to the 40S ribosome. The eIF-3 complex specifically targets and initiates translation of a subset of mRNAs involved in cell proliferation. In the eIF-3 complex, eif3d specifically recognizes and binds the 7-methylguanosine cap of a subset of mRNAs. This Drosophila pseudoobscura pseudoobscura (Fruit fly) protein is Eukaryotic translation initiation factor 3 subunit D-2.